Reading from the N-terminus, the 318-residue chain is Ribose-phosphate pyrophosphokinase 2 (318 aa).

Arginine 96 to aspartate 101 contacts ATP. Residues aspartate 128, histidine 130, aspartate 139, and aspartate 143 each coordinate Mg(2+). Position 130 (histidine 130) interacts with ATP. Residues lysine 212–glycine 227 are binding of phosphoribosylpyrophosphate.

It belongs to the ribose-phosphate pyrophosphokinase family. As to quaternary structure, homodimer. The active form is probably a hexamer composed of 3 homodimers. The cofactor is Mg(2+).

The enzyme catalyses D-ribose 5-phosphate + ATP = 5-phospho-alpha-D-ribose 1-diphosphate + AMP + H(+). Its pathway is metabolic intermediate biosynthesis; 5-phospho-alpha-D-ribose 1-diphosphate biosynthesis; 5-phospho-alpha-D-ribose 1-diphosphate from D-ribose 5-phosphate (route I): step 1/1. Its activity is regulated as follows. Activated by magnesium and inorganic phosphate. Competitively or non-competitively inhibited by ADP, 2,3-bisphosphoglyceride or GDP. In terms of biological role, catalyzes the synthesis of phosphoribosylpyrophosphate (PRPP) that is essential for nucleotide synthesis. The sequence is that of Ribose-phosphate pyrophosphokinase 2 (prps2) from Xenopus tropicalis (Western clawed frog).